The primary structure comprises 167 residues: Translation initiation factor IF-3 (167 aa).

The protein belongs to the IF-3 family. In terms of assembly, monomer.

Its subcellular location is the cytoplasm. In terms of biological role, IF-3 binds to the 30S ribosomal subunit and shifts the equilibrium between 70S ribosomes and their 50S and 30S subunits in favor of the free subunits, thus enhancing the availability of 30S subunits on which protein synthesis initiation begins. The chain is Translation initiation factor IF-3 from Bacillus cereus (strain ATCC 14579 / DSM 31 / CCUG 7414 / JCM 2152 / NBRC 15305 / NCIMB 9373 / NCTC 2599 / NRRL B-3711).